A 287-amino-acid polypeptide reads, in one-letter code: uncharacterized protein (287 aa).

2 helical membrane passes run 12 to 32 and 217 to 237; these read IILL…GAAL and YTIG…VLIV.

The protein localises to the cell membrane. This is an uncharacterized protein from Mycoplasma pneumoniae (strain ATCC 29342 / M129 / Subtype 1) (Mycoplasmoides pneumoniae).